The primary structure comprises 161 residues: Regulator of ribonuclease activity A (161 aa).

It belongs to the RraA family. In terms of assembly, homotrimer. Binds to both RNA-binding sites in the C-terminal region of Rne and to RhlB.

It is found in the cytoplasm. In terms of biological role, globally modulates RNA abundance by binding to RNase E (Rne) and regulating its endonucleolytic activity. Can modulate Rne action in a substrate-dependent manner by altering the composition of the degradosome. Modulates RNA-binding and helicase activities of the degradosome. The chain is Regulator of ribonuclease activity A from Klebsiella pneumoniae (strain 342).